A 90-amino-acid chain; its full sequence is UPF0223 protein lwe1035 (90 aa).

The protein belongs to the UPF0223 family.

This chain is UPF0223 protein lwe1035, found in Listeria welshimeri serovar 6b (strain ATCC 35897 / DSM 20650 / CCUG 15529 / CIP 8149 / NCTC 11857 / SLCC 5334 / V8).